Consider the following 409-residue polypeptide: N-acetylglucosamine-6-phosphate deacetylase (409 aa).

An a divalent metal cation-binding site is contributed by Glu143. Substrate is bound at residue 154–155 (AH). Residues His211 and His232 each coordinate a divalent metal cation. Residues 235–236 (NA), Arg243, and 269–272 (DGIH) each bind substrate. Asp294 (proton donor/acceptor) is an active-site residue. Substrate is bound at residue 328 to 330 (LGG).

The protein belongs to the metallo-dependent hydrolases superfamily. NagA family. A divalent metal cation serves as cofactor.

The enzyme catalyses N-acetyl-D-glucosamine 6-phosphate + H2O = D-glucosamine 6-phosphate + acetate. Its pathway is amino-sugar metabolism; N-acetylneuraminate degradation. Functionally, hydrolyzes the N-glycolyl group from N-glycolylglucosamine 6-phosphate (GlcNGc-6-P) in the N-glycolylneuraminic acid (Neu5Gc) degradation pathway. This is N-acetylglucosamine-6-phosphate deacetylase (Amdhd2) from Mus musculus (Mouse).